Here is a 620-residue protein sequence, read N- to C-terminus: DNA mismatch repair protein MutL (620 aa).

It belongs to the DNA mismatch repair MutL/HexB family.

Its function is as follows. This protein is involved in the repair of mismatches in DNA. It is required for dam-dependent methyl-directed DNA mismatch repair. May act as a 'molecular matchmaker', a protein that promotes the formation of a stable complex between two or more DNA-binding proteins in an ATP-dependent manner without itself being part of a final effector complex. The polypeptide is DNA mismatch repair protein MutL (Clostridium tetani (strain Massachusetts / E88)).